Reading from the N-terminus, the 85-residue chain is Large ribosomal subunit protein bL27 (85 aa).

Positions 1–20 (MAHKKAGGSTRNGRDSEAKR) are disordered.

Belongs to the bacterial ribosomal protein bL27 family.

The sequence is that of Large ribosomal subunit protein bL27 from Serratia proteamaculans (strain 568).